We begin with the raw amino-acid sequence, 62 residues long: Large ribosomal subunit protein eL19 (62 aa).

This sequence belongs to the eukaryotic ribosomal protein eL19 family.

The polypeptide is Large ribosomal subunit protein eL19 (RPL19) (Zea mays (Maize)).